The primary structure comprises 488 residues: MFGLPIPIIGLLIAVFVLVFLVLRTRVHAFIAMLIAASIAGLVGGMSADETLNSITKGFGGTLGSIGIVIGLGVMMGSVLEVSGAAEKMAYSFIKMLGQKKEEWALAITGYVVSIPIFVDSAFVILYPVAKALAKNGKRSLLTLGVALAGGLAVTHHTVPPTPGPLGVAGLFGVDIGAMLLTGMCMAFLPVVGIVLYAKWLDKKYPNFNQEVFTEEELKQKYDSYIESREKKELPSLGLSLLPIVLPIVLIFIKAVVHLFVKDVPEALTSIPYQIVSFLGHPVIVLALSVLISVYTLLPKADKNTTALHLEEGVKTAGIILLVTGAGGALGAVLRDSGAGKQLAEQIANLPISPILIPFIVSTLVRFIQGSGTVAMITAASISSPILAQIPGVNMLLAAQAATMGSLFFGYFNDSLFWVVNRMMGINDVKKQMVVWSVPTTIAWGIGGISVILANLIFGNDGSVFDLLFPVVVLASILFYIKLQNKNL.

A run of 12 helical transmembrane segments spans residues 2–22, 27–47, 59–79, 106–126, 176–196, 241–261, 275–295, 314–334, 347–367, 368–388, 438–458, and 461–481; these read FGLP…VFLV, VHAF…GGMS, FGGT…MGSV, LAIT…FVIL, IGAM…GIVL, LLPI…HLFV, IVSF…ISVY, VKTA…GAVL, IANL…LVRF, IQGS…PILA, VPTT…NLIF, and DGSV…LFYI.

The protein belongs to the GntP permease family.

Its subcellular location is the cell inner membrane. This is an uncharacterized protein from Haemophilus influenzae (strain ATCC 51907 / DSM 11121 / KW20 / Rd).